We begin with the raw amino-acid sequence, 22 residues long: CVPKRKVSPSXRNMRXAHDXLT.

Positions 1–22 (CVPKRKVSPSXRNMRXAHDXLT) are disordered.

It belongs to the bacterial ribosomal protein bL32 family.

The protein is Large ribosomal subunit protein bL32 (rpmF) of Brevundimonas vesicularis (Pseudomonas vesicularis).